The primary structure comprises 163 residues: RxLR effector protein PITG_13625 (163 aa).

The first 23 residues, 1 to 23 (MKVSKAIVALAALCMALLAPAAG), serve as a signal peptide directing secretion. Positions 37–52 (RHLRQESAELATTPEE) match the RxLR-dEER motif.

Belongs to the RxLR effector family.

It localises to the secreted. The protein localises to the host cell membrane. Effector that enhances P.infestans colonization of Nicotiana benthamiana leaves. The polypeptide is RxLR effector protein PITG_13625 (Phytophthora infestans (strain T30-4) (Potato late blight agent)).